We begin with the raw amino-acid sequence, 158 residues long: Rhombotin-2 (158 aa).

LIM zinc-binding domains are found at residues 30 to 89 (CGGC…RLFG) and 94 to 153 (CASC…EWTK).

Interacts with BEX2 and KDM5A. Interacts via its LIM domains with ELF2 and LDB1. Also interacts with basic helix-loop-helix protein TAL1/SCL and can assemble in a complex with LMO2 and TAL1/SCL. In terms of tissue distribution, expressed in early mouse development in central nervous system, lung, kidney, liver and spleen but only very low levels occur in thymus.

Its subcellular location is the nucleus. Functionally, acts with TAL1/SCL to regulate red blood cell development. Also acts with LDB1 to maintain erythroid precursors in an immature state. This chain is Rhombotin-2 (Lmo2), found in Mus musculus (Mouse).